The sequence spans 90 residues: UPF0213 protein lmo0166 (90 aa).

The GIY-YIG domain occupies 5-80 (SEHFFYVLKC…KKLSRKNKDA (76 aa)).

The protein belongs to the UPF0213 family.

The sequence is that of UPF0213 protein lmo0166 from Listeria monocytogenes serovar 1/2a (strain ATCC BAA-679 / EGD-e).